Reading from the N-terminus, the 386-residue chain is Oxytocin receptor (386 aa).

A disordered region spans residues 1–31 (MEGVLAANWSAEAVNSSAAPPEAEGNRTAGP). The Extracellular portion of the chain corresponds to 1 to 38 (MEGVLAANWSAEAVNSSAAPPEAEGNRTAGPPQRNEAL). N-linked (GlcNAc...) asparagine glycosylation is found at asparagine 8, asparagine 15, and asparagine 26. A helical membrane pass occupies residues 39-63 (ARVEVAVLCLILFLALSGNACVLLA). Over 64–74 (LRTTRHKHSRL) the chain is Cytoplasmic. The chain crosses the membrane as a helical span at residues 75–97 (FFFMKHLSIADLVVAVFQVLPQL). At 98–113 (LWDITFRFYGPDLLCR) the chain is on the extracellular side. An intrachain disulfide couples cysteine 112 to cysteine 187. The helical transmembrane segment at 114–135 (LVKYLQVVGMFASTYLLLLMSL) threads the bilayer. At 136–154 (DRCLAICQPLRALRRPADR) the chain is on the cytoplasmic side. Residues 155–175 (LAVLATWLGCLVASAPQVHIF) traverse the membrane as a helical segment. At 176–202 (SLREVADGVFDCWAVFIQPWGPKAYIT) the chain is on the extracellular side. Residues 203–225 (WITLAVYIVPVIVLAACYGLISF) form a helical membrane-spanning segment. At 226–277 (KIWQNLRLKTAAEAAEAIAGTEGAAAGSRGRAALARVSSVKLISKAKIRTVK) the chain is on the cytoplasmic side. The chain crosses the membrane as a helical span at residues 278–296 (MTFIIVLAFIVCWTPFFFV). Over 297-311 (QMWSVWDADAPKEAS) the chain is Extracellular. Residues 312–334 (AFIIAMLLASLNSCCNPWIYMLF) form a helical membrane-spanning segment. Topologically, residues 335-386 (TGHLFHELVQRFLCCSSSHLKTSRPGETSVSKKSNSSTFVLSQHSSSQKSCS) are cytoplasmic. The segment covering 355–375 (KTSRPGETSVSKKSNSSTFVL) has biased composition (polar residues). The tract at residues 355–386 (KTSRPGETSVSKKSNSSTFVLSQHSSSQKSCS) is disordered. Phosphoserine is present on residues serine 368 and serine 370. Low complexity predominate over residues 376 to 386 (SQHSSSQKSCS).

Belongs to the G-protein coupled receptor 1 family. Vasopressin/oxytocin receptor subfamily.

It is found in the cell membrane. Its function is as follows. Receptor for oxytocin. The activity of this receptor is mediated by G proteins which activate a phosphatidylinositol-calcium second messenger system. The sequence is that of Oxytocin receptor (OXTR) from Sus scrofa (Pig).